A 276-amino-acid chain; its full sequence is Pantothenate synthetase (276 aa).

M26 to H33 provides a ligand contact to ATP. H33 acts as the Proton donor in catalysis. A (R)-pantoate-binding site is contributed by Q57. Q57 contributes to the beta-alanine binding site. G142 to D145 serves as a coordination point for ATP. Q148 serves as a coordination point for (R)-pantoate. ATP is bound by residues I171 and K179–R182.

Belongs to the pantothenate synthetase family. Homodimer.

It localises to the cytoplasm. It catalyses the reaction (R)-pantoate + beta-alanine + ATP = (R)-pantothenate + AMP + diphosphate + H(+). It participates in cofactor biosynthesis; (R)-pantothenate biosynthesis; (R)-pantothenate from (R)-pantoate and beta-alanine: step 1/1. Catalyzes the condensation of pantoate with beta-alanine in an ATP-dependent reaction via a pantoyl-adenylate intermediate. In Exiguobacterium sp. (strain ATCC BAA-1283 / AT1b), this protein is Pantothenate synthetase.